Consider the following 445-residue polypeptide: Allantoinase (445 aa).

Positions 63, 65, 150, 186, 238, and 311 each coordinate Zn(2+). Residue Lys150 is modified to N6-carboxylysine.

It belongs to the metallo-dependent hydrolases superfamily. Allantoinase family. In terms of assembly, homotetramer. Zn(2+) serves as cofactor. Post-translationally, carboxylation allows a single lysine to coordinate two zinc ions.

It catalyses the reaction (S)-allantoin + H2O = allantoate + H(+). Its pathway is nitrogen metabolism; (S)-allantoin degradation; allantoate from (S)-allantoin: step 1/1. Its function is as follows. Catalyzes the conversion of allantoin (5-ureidohydantoin) to allantoic acid by hydrolytic cleavage of the five-member hydantoin ring. The polypeptide is Allantoinase (Streptomyces avermitilis (strain ATCC 31267 / DSM 46492 / JCM 5070 / NBRC 14893 / NCIMB 12804 / NRRL 8165 / MA-4680)).